The chain runs to 329 residues: uncharacterized protein (329 aa).

This sequence to type I restriction system adenine methylases.

This is an uncharacterized protein from Bacillus subtilis (strain 168).